Reading from the N-terminus, the 347-residue chain is Ribosomal RNA small subunit methyltransferase C (347 aa).

Belongs to the methyltransferase superfamily. RsmC family. In terms of assembly, monomer.

It is found in the cytoplasm. It carries out the reaction guanosine(1207) in 16S rRNA + S-adenosyl-L-methionine = N(2)-methylguanosine(1207) in 16S rRNA + S-adenosyl-L-homocysteine + H(+). In terms of biological role, specifically methylates the guanine in position 1207 of 16S rRNA in the 30S particle. The sequence is that of Ribosomal RNA small subunit methyltransferase C from Yersinia pseudotuberculosis serotype O:1b (strain IP 31758).